Consider the following 30-residue polypeptide: Natriuretic peptides A (30 aa).

The propeptide occupies 1–3 (APR). Cys-11 and Cys-27 are oxidised to a cystine.

The protein belongs to the natriuretic peptide family. Post-translationally, cleaved upon secretion to produce the functional hormone.

It localises to the secreted. In terms of biological role, hormone playing a key role in cardiovascular homeostasis through regulation of natriuresis, diuresis, and vasodilation. Has a cGMP-stimulating activity. The protein is Natriuretic peptides A of Pelophylax ridibundus (Marsh frog).